A 254-amino-acid polypeptide reads, in one-letter code: Triosephosphate isomerase (254 aa).

12 to 14 (NWK) is a substrate binding site. Catalysis depends on H99, which acts as the Electrophile. E169 serves as the catalytic Proton acceptor. Residues G175, S214, and 235 to 236 (GG) each bind substrate.

This sequence belongs to the triosephosphate isomerase family. As to quaternary structure, homodimer.

It localises to the cytoplasm. It carries out the reaction D-glyceraldehyde 3-phosphate = dihydroxyacetone phosphate. The protein operates within carbohydrate biosynthesis; gluconeogenesis. It participates in carbohydrate degradation; glycolysis; D-glyceraldehyde 3-phosphate from glycerone phosphate: step 1/1. Functionally, involved in the gluconeogenesis. Catalyzes stereospecifically the conversion of dihydroxyacetone phosphate (DHAP) to D-glyceraldehyde-3-phosphate (G3P). In Bartonella bacilliformis (strain ATCC 35685 / KC583 / Herrer 020/F12,63), this protein is Triosephosphate isomerase.